A 295-amino-acid polypeptide reads, in one-letter code: Excinuclease cho (295 aa).

The 76-residue stretch at 33 to 108 folds into the GIY-YIG domain; the sequence is TRPGVYLFHG…IKEQQPLFNK (76 aa).

Its function is as follows. Incises the DNA at the 3' side of a lesion during nucleotide excision repair. Incises the DNA farther away from the lesion than UvrC. Not able to incise the 5' site of a lesion. When a lesion remains because UvrC is not able to induce the 3' incision, Cho incises the DNA. Then UvrC makes the 5' incision. The combined action of Cho and UvrC broadens the substrate range of nucleotide excision repair. The protein is Excinuclease cho (cho) of Escherichia coli O157:H7.